The primary structure comprises 122 residues: Large ribosomal subunit protein uL14 (122 aa).

This sequence belongs to the universal ribosomal protein uL14 family. Part of the 50S ribosomal subunit. Forms a cluster with proteins L3 and L19. In the 70S ribosome, L14 and L19 interact and together make contacts with the 16S rRNA in bridges B5 and B8.

Binds to 23S rRNA. Forms part of two intersubunit bridges in the 70S ribosome. The sequence is that of Large ribosomal subunit protein uL14 from Shewanella sediminis (strain HAW-EB3).